The primary structure comprises 517 residues: Protein NETWORKED 4B (517 aa).

2 disordered regions span residues 1 to 29 (MASSTAQSKKQFKRSMTKKSHSWWWDSHN) and 101 to 159 (LQKN…EDGD). A compositionally biased stretch (basic residues) spans 10 to 21 (KQFKRSMTKKSH). An NAB domain is found at 21–101 (HSWWWDSHNC…ERYDQASGEL (81 aa)). Positions 107-119 (SEIQSQSSLEISS) are enriched in low complexity. Residues 121 to 135 (TKEKLSRRQSSHKEE) are compositionally biased toward basic and acidic residues. Positions 156–486 (EDGDEALIRR…EQKREAIRQL (331 aa)) form a coiled coil.

The protein belongs to the NET family.

Plant-specific actin binding protein. May be part of a membrane-cytoskeletal adapter complex. This Arabidopsis thaliana (Mouse-ear cress) protein is Protein NETWORKED 4B.